We begin with the raw amino-acid sequence, 79 residues long: Translational regulator CsrA (79 aa).

Belongs to the CsrA/RsmA family. As to quaternary structure, homodimer; the beta-strands of each monomer intercalate to form a hydrophobic core, while the alpha-helices form wings that extend away from the core.

The protein resides in the cytoplasm. In terms of biological role, a translational regulator that binds mRNA to regulate translation initiation and/or mRNA stability. Usually binds in the 5'-UTR at or near the Shine-Dalgarno sequence preventing ribosome-binding, thus repressing translation. Its main target seems to be the major flagellin gene, while its function is anatagonized by FliW. The polypeptide is Translational regulator CsrA (Syntrophus aciditrophicus (strain SB)).